Here is a 360-residue protein sequence, read N- to C-terminus: Probable arginine kinase ZC434.8 (360 aa).

Positions 10 to 92 (SIEEVYTKLQ…FNPVIEEYHN (83 aa)) constitute a Phosphagen kinase N-terminal domain. Residue 65-69 (GVGIY) coordinates substrate. In terms of domain architecture, Phosphagen kinase C-terminal spans 122–359 (FIVSTRIRCG…KKLIELEKAA (238 aa)). ATP contacts are provided by residues 125–129 (STRIR) and histidine 189. Residue glutamate 229 participates in substrate binding. An ATP-binding site is contributed by arginine 233. Cysteine 275 is a substrate binding site. ATP-binding positions include 284 to 288 (RASVH), 312 to 317 (RGIHGE), and aspartate 327. Position 317 (glutamate 317) interacts with substrate.

The protein belongs to the ATP:guanido phosphotransferase family.

It carries out the reaction L-arginine + ATP = N(omega)-phospho-L-arginine + ADP + H(+). The protein is Probable arginine kinase ZC434.8 of Caenorhabditis elegans.